The following is a 236-amino-acid chain: Kinetochore protein Spc25 (236 aa).

A coiled-coil region spans residues 44–106 (KNIISAKEAI…DMEAQLLRHT (63 aa)). A disordered region spans residues 194–217 (EVAGASPVTPSGSERPKATSKHSN).

The protein belongs to the SPC25 family. As to quaternary structure, component of the Ndc80 complex, which is composed of Ndc80, Nuf2 and Spc25.

It localises to the nucleus. It is found in the chromosome. The protein localises to the centromere. Its subcellular location is the kinetochore. Functionally, acts as a component of the essential kinetochore-associated Ndc80 complex, which is required for chromosome segregation and spindle checkpoint activity during meiosis and mitosis. Required for kinetochore integrity and the organization of stable microtubule binding sites in the outer plate of the kinetochore. Participates in SAC signaling that responds specifically to disruptions in spindle microtubule dynamics. The NDC80 complex synergistically enhances the affinity of the SKA1 complex for microtubules and may allow the NDC80 complex to track depolymerizing microtubules. The polypeptide is Kinetochore protein Spc25 (Drosophila persimilis (Fruit fly)).